Here is a 259-residue protein sequence, read N- to C-terminus: Pycsar effector protein RsmPycTIR (259 aa).

1-120 lines the a nucleoside 3',5'-cyclic phosphate pocket; that stretch reads MVGGDEVIAN…RRVHEDFSGR (120 aa). A TIR-like region spans residues 126 to 229; sequence LATGISRRTS…AEFQYQISSS (104 aa). 3 helical membrane-spanning segments follow: residues 136-156, 169-189, and 234-254; these read GWNWTVISLTAGVLSAAAIWY, VLLPLVVGLTIFLLTLLADPV, and QATALLAPIVLGALAAYLFWI.

It localises to the cell inner membrane. The catalysed reaction is NAD(+) + H2O = ADP-D-ribose + nicotinamide + H(+). Pycsar (pyrimidine cyclase system for antiphage resistance) provides immunity against bacteriophage. The pyrimidine cyclase (PycC) synthesizes cyclic nucleotides in response to infection; these serve as specific second messenger signals. The signals activate the adjacent effector, leading to bacterial cell death and abortive phage infection. A clade B Pycsar system. Its function is as follows. The effector gene of a two-gene Pycsar system. Expression of this and adjacent uridylate cyclase RsmPycC (AC A0A1V0HUX5) probably confers resistance to bacteriophage. The genes are probably only expressed in response to bacteriophage infection. Probably only responds to cUMP (produced by its cognate NTP cyclase), it may act by degrading NAD(+) and/or by impairing membrane integrity. In Rhodovulum sp. (strain MB263), this protein is Pycsar effector protein RsmPycTIR.